The chain runs to 150 residues: Calmodulin (150 aa).

4 EF-hand domains span residues 9–44 (EQIAEFREAFSLFDRDQDGNITSNELGVVMRSLGQS), 45–80 (PTAAELQDMINEVDADGNGTIDFTEFLTMMARKMKD), 82–117 (DNEEEVREAFKVFDKDGNGYITVEELTHVLTSLGER), and 118–150 (LSQEEVADMIREADTDGDGVINYEEFSRVISSK). Ca(2+) is bound by residues aspartate 22, aspartate 24, aspartate 26, asparagine 28, glutamate 33, aspartate 58, aspartate 60, asparagine 62, threonine 64, glutamate 69, aspartate 95, aspartate 97, asparagine 99, tyrosine 101, glutamate 106, aspartate 131, aspartate 133, aspartate 135, and glutamate 142.

It belongs to the calmodulin family. As to quaternary structure, interacts with rng2.

The protein localises to the cytoplasm. The protein resides in the cytoskeleton. It is found in the microtubule organizing center. Its subcellular location is the spindle pole body. Functionally, calmodulin mediates the control of a large number of enzymes, ion channels and other proteins by Ca(2+). Among the enzymes to be stimulated by the calmodulin-Ca(2+) complex are a number of protein kinases and phosphatases. This chain is Calmodulin (cam1), found in Schizosaccharomyces pombe (strain 972 / ATCC 24843) (Fission yeast).